A 178-amino-acid chain; its full sequence is MSSAWEAVRALASGFATTFVHLFRKPVTEEYPEVKRALPARTRAVIVLTRDPDGGERCVACYLCSAVCPVSCISMQAAEREDGRRHAAWFRINFARCIYCGLCEEACPTSAIQLTPFFETCERDILKLVYEKEDLLVDHQGKDKEYNFYKYAGVTTDVGGKGEHVQEDEPVDLRSNLP.

4Fe-4S ferredoxin-type domains are found at residues 46 to 78 (IVLTRDPDGGERCVACYLCSAVCPVSCISMQAA) and 88 to 117 (AWFRINFARCIYCGLCEEACPTSAIQLTPF). Residues cysteine 58, cysteine 61, cysteine 64, cysteine 68, cysteine 97, cysteine 100, cysteine 103, and cysteine 107 each contribute to the [4Fe-4S] cluster site.

It belongs to the complex I 23 kDa subunit family. As to quaternary structure, NDH-1 is composed of 14 different subunits. Subunits NuoA, H, J, K, L, M, N constitute the membrane sector of the complex. The cofactor is [4Fe-4S] cluster.

The protein resides in the cell inner membrane. The catalysed reaction is a quinone + NADH + 5 H(+)(in) = a quinol + NAD(+) + 4 H(+)(out). NDH-1 shuttles electrons from NADH, via FMN and iron-sulfur (Fe-S) centers, to quinones in the respiratory chain. The immediate electron acceptor for the enzyme in this species is believed to be ubiquinone. Couples the redox reaction to proton translocation (for every two electrons transferred, four hydrogen ions are translocated across the cytoplasmic membrane), and thus conserves the redox energy in a proton gradient. This is NADH-quinone oxidoreductase subunit I 2 from Syntrophobacter fumaroxidans (strain DSM 10017 / MPOB).